The primary structure comprises 234 residues: UPF0173 metal-dependent hydrolase RHE_CH01853 (234 aa).

It belongs to the UPF0173 family.

The polypeptide is UPF0173 metal-dependent hydrolase RHE_CH01853 (Rhizobium etli (strain ATCC 51251 / DSM 11541 / JCM 21823 / NBRC 15573 / CFN 42)).